The sequence spans 269 residues: LOB domain-containing protein 6 (269 aa).

An LOB domain is found at 37 to 138; it reads SPCAACKFLR…QDLARAKFEL (102 aa).

It belongs to the LOB domain-containing protein family.

The protein resides in the nucleus. Its function is as follows. Negative regulator of cell proliferation in the adaxial side of leaves. Regulates the formation of a symmetric lamina and the establishment of venation. This chain is LOB domain-containing protein 6 (LBD6), found in Oryza sativa subsp. indica (Rice).